The chain runs to 583 residues: MTIQLQKPDITELKPRITVFGVGGGGGNAVNNMITVGLQGVDFVVANTDAQALTMTKADRVIQLGVNVTEGLGAGSQPEVGRAAAEECIDEIIDHLNGTHMCFVTAGMGGGTGTGAAPVVAQAARNKGILTVGVVTKPFHFEGGRRMRLAEQGIEELQKSVDTLIVIPNQNLFRIANDKTTFADAFAMADQVLYSGVACITDLMVKEGLINLDFADVRSVMREMARPMMGTGEASGPARAMQAAEAAIANPLLDETSMKGAQGLLISITGGRDLTLFEVDEAATRIREEVDPDANIILGATFDEALEGLIRVSVVATGIDRVAGIGEQNIAEMRAAAAKPLIRPSAAVAPAPAAVQPAHAVSQAPKTVDQIAQTIRSAEAEMERELGFAAHQQPSQDFRPQSKLFASSPAEAPAALRPAQPVQQAAPAPVAQAPVYHAPEQVAVPAPRMQQAQAPVYQEPAPVGRQPEPVRMPKVEDFPPVVKAEMDHRDRATPVAQEERGPMGLLKRITNSLGRREEEEVPSDMMDAPSMAPQRRAPLSPEASLYAPRRGQLDDHGRATPSSSSHHDDDQLEIPAFLRRQSN.

Residues 24 to 28, 111 to 113, glutamate 142, arginine 146, and aspartate 190 each bind GTP; these read GGGGN and GTG. Disordered regions lie at residues 391–425 and 510–583; these read HQQP…VQQA and TNSL…RQSN. The span at 412-425 shows a compositional bias: low complexity; sequence APAALRPAQPVQQA.

Belongs to the FtsZ family. In terms of assembly, homodimer. Polymerizes to form a dynamic ring structure in a strictly GTP-dependent manner. Interacts directly with several other division proteins.

The protein localises to the cytoplasm. In terms of biological role, essential cell division protein that forms a contractile ring structure (Z ring) at the future cell division site. The regulation of the ring assembly controls the timing and the location of cell division. One of the functions of the FtsZ ring is to recruit other cell division proteins to the septum to produce a new cell wall between the dividing cells. Binds GTP and shows GTPase activity. In Rhizobium radiobacter (Agrobacterium tumefaciens), this protein is Cell division protein FtsZ.